The following is a 457-amino-acid chain: Glycine receptor subunit alpha-1 (457 aa).

An N-terminal signal peptide occupies residues 1-28 (MYSFNTLRLYLWETIVFFSLAASKEAEA). The Extracellular segment spans residues 29-250 (ARSASKPMSP…RFHLERQMGY (222 aa)). N66 is a glycosylation site (N-linked (GlcNAc...) asparagine). R93 and S157 together coordinate glycine. Residues C166 and C180 are joined by a disulfide bond. The Zn(2+) site is built by E220 and D222. A disulfide bond links C226 and C237. 230 to 235 (YNTGKF) lines the strychnine pocket. T232 lines the glycine pocket. H243 contributes to the Zn(2+) binding site. The helical transmembrane segment at 251–272 (YLIQMYIPSLLIVILSWISFWI) threads the bilayer. Residues 273 to 277 (NMDAA) are Cytoplasmic-facing. The helical transmembrane segment at 278-298 (PARVGLGITTVLTMTTQSSGS) threads the bilayer. Residues 299 to 309 (RASLPKVSYVK) lie on the Extracellular side of the membrane. A helical transmembrane segment spans residues 310–330 (AIDIWMAVCLLFVFSALLEYA). At 331 to 425 (AVNFVSRQHK…FIQRAKKIDK (95 aa)) the chain is on the cytoplasmic side. The interval 391–410 (KGANNSNTTNPPPAPSKSPE) is disordered. A helical transmembrane segment spans residues 426–446 (ISRIGFPMAFLIFNMFYWIIY). The Extracellular segment spans residues 447–457 (KIVRREDVHNQ).

It belongs to the ligand-gated ion channel (TC 1.A.9) family. Glycine receptor (TC 1.A.9.3) subfamily. GLRA1 sub-subfamily. As to quaternary structure, interacts with GLRB to form heteropentameric channels; this is probably the predominant form in vivo. Heteropentamer composed of four GLRA1 subunits and one GLRB subunit. Heteropentamer composed of two GLRA1 and three GLRB. Heteropentamer composed of three GLRA1 and two GLRB. Homopentamer (in vitro). Both homopentamers and heteropentamers form functional ion channels, but their characteristics are subtly different. Detected on spinal cord neurons (at protein level). Detected in spinal cord.

The protein localises to the postsynaptic cell membrane. It localises to the synapse. It is found in the perikaryon. Its subcellular location is the cell projection. The protein resides in the dendrite. The protein localises to the cell membrane. It carries out the reaction chloride(in) = chloride(out). Channel opening is triggered by extracellular glycine. Channel characteristics depend on the subunit composition; heteropentameric channels are activated by lower glycine levels and display faster desensitization. Its function is as follows. Subunit of heteromeric glycine-gated chloride channels. Plays an important role in the down-regulation of neuronal excitability. Contributes to the generation of inhibitory postsynaptic currents. Channel activity is potentiated by ethanol. Potentiation of channel activity by intoxicating levels of ethanol contribute to the sedative effects of ethanol. This Bos taurus (Bovine) protein is Glycine receptor subunit alpha-1 (GLRA1).